The following is a 398-amino-acid chain: Glia-derived nexin (398 aa).

A signal peptide spans 1–19 (MNWHLPLFLLASVTLPSIC). 2 N-linked (GlcNAc...) asparagine glycosylation sites follow: asparagine 118 and asparagine 159.

The protein belongs to the serpin family.

It localises to the secreted. The protein localises to the extracellular space. Functionally, serine protease inhibitor with activity toward thrombin, trypsin, and urokinase. Promotes neurite extension by inhibiting thrombin. Binds heparin. This chain is Glia-derived nexin (SERPINE2), found in Homo sapiens (Human).